We begin with the raw amino-acid sequence, 232 residues long: 2,3,4,5-tetrahydropyridine-2,6-dicarboxylate N-acetyltransferase (232 aa).

Belongs to the transferase hexapeptide repeat family. DapH subfamily.

It catalyses the reaction (S)-2,3,4,5-tetrahydrodipicolinate + acetyl-CoA + H2O = L-2-acetamido-6-oxoheptanedioate + CoA. It functions in the pathway amino-acid biosynthesis; L-lysine biosynthesis via DAP pathway; LL-2,6-diaminopimelate from (S)-tetrahydrodipicolinate (acetylase route): step 1/3. In terms of biological role, catalyzes the transfer of an acetyl group from acetyl-CoA to tetrahydrodipicolinate. The sequence is that of 2,3,4,5-tetrahydropyridine-2,6-dicarboxylate N-acetyltransferase from Kosmotoga olearia (strain ATCC BAA-1733 / DSM 21960 / TBF 19.5.1).